The primary structure comprises 535 residues: 5,6-dihydroxyindole-2-carboxylic acid oxidase (535 aa).

Positions 1 to 23 (MQLPMLLLVSLPLLLNMFKPAEA) are cleaved as a signal peptide. The Lumenal, melanosome portion of the chain corresponds to 24 to 478 (QFPRQCATIE…GPLRVTEMIT (455 aa)). 5 cysteine pairs are disulfide-bonded: cysteine 29–cysteine 40, cysteine 41–cysteine 64, cysteine 55–cysteine 98, cysteine 100–cysteine 109, and cysteine 112–cysteine 121. 2 N-linked (GlcNAc...) asparagine glycosylation sites follow: asparagine 95 and asparagine 103. Asparagine 180 carries an N-linked (GlcNAc...) asparagine glycan. Residues histidine 191, histidine 214, and histidine 223 each coordinate Zn(2+). Disulfide bonds link cysteine 257–cysteine 260 and cysteine 289–cysteine 302. Asparagine 303 and asparagine 349 each carry an N-linked (GlcNAc...) asparagine glycan. Residues histidine 376 and histidine 380 each coordinate Zn(2+). An N-linked (GlcNAc...) asparagine glycan is attached at asparagine 384. Histidine 403 is a Zn(2+) binding site. The helical transmembrane segment at 479–499 (IAIVTALVLVAIIFAAAACIV) threads the bilayer. Residues 500–535 (RAKKNRDELHQPLLTDQYQHYSDDYDGIATPSQSVV) are Cytoplasmic-facing.

Belongs to the tyrosinase family. Tyrosinase, TYRP1 and TYRP2 may form a multienzyme complex. Cu(2+) is required as a cofactor. The cofactor is Zn(2+).

It is found in the melanosome membrane. It catalyses the reaction 2 5,6-dihydroxyindole-2-carboxylate + O2 = 2 indole-5,6-quinone-2-carboxylate + 2 H2O. It functions in the pathway pigment biosynthesis; melanin biosynthesis. Plays a role in melanin biosynthesis. Catalyzes the oxidation of 5,6-dihydroxyindole-2-carboxylic acid (DHICA) into indole-5,6-quinone-2-carboxylic acid. May regulate or influence the type of melanin synthesized. Also to a lower extent, capable of hydroxylating tyrosine and producing melanin. This chain is 5,6-dihydroxyindole-2-carboxylic acid oxidase (TYRP1), found in Gallus gallus (Chicken).